The chain runs to 212 residues: ER lumen protein-retaining receptor 2 (212 aa).

Topologically, residues 1–4 (MNIF) are lumenal. Residues 5-24 (RLTGDLSHLAAIIILLLKIW) traverse the membrane as a helical segment. The Cytoplasmic segment spans residues 25 to 32 (KSRSCAGI). The helical transmembrane segment at 33–52 (SGKSQILFALVFTTRYLDLL) threads the bilayer. Residues 47-48 (RY) are interaction with the K-D-E-L motif on target proteins. Over 53 to 58 (TSFISL) the chain is Lumenal. The chain crosses the membrane as a helical span at residues 59-79 (YNTCMKVIYIGCAYATVYLIY). The Cytoplasmic segment spans residues 80–92 (AKFRATYDGNHDT). Residues 93–110 (FRAEFLVVPVGGLAFLVN) form a helical membrane-spanning segment. At 111–116 (HDFSPL) the chain is on the lumenal side. Residues 117–135 (EILWTFSIYLESVAILPQL) form a helical membrane-spanning segment. Residues 136-149 (FMISKTGEAETITT) are Cytoplasmic-facing. A helical transmembrane segment spans residues 150 to 168 (HYLFCLGVYRALYLFNWIW). The segment at 159-169 (RALYLFNWIWR) is interaction with the K-D-E-L motif on target proteins. At 169–178 (RFYFEGFFDM) the chain is on the lumenal side. Residues 179-199 (IAIVAGVVQTILYCDFFYLYV) form a helical membrane-spanning segment. Over 200–212 (TKVLKGKKLSLPA) the chain is Cytoplasmic. The interval 204–207 (KGKK) is important for recycling of cargo proteins with the sequence motif K-D-E-L from the Golgi to the endoplasmic reticulum.

The protein belongs to the ERD2 family.

Its subcellular location is the endoplasmic reticulum membrane. The protein resides in the golgi apparatus membrane. It is found in the cytoplasmic vesicle. The protein localises to the COPI-coated vesicle membrane. Its function is as follows. Receptor for the C-terminal sequence motif K-D-E-L that is present on endoplasmic reticulum resident proteins and that mediates their recycling from the Golgi back to the endoplasmic reticulum. Binding is pH dependent, and is optimal at pH 5-5.4. The sequence is that of ER lumen protein-retaining receptor 2 (kdelr2) from Danio rerio (Zebrafish).